Reading from the N-terminus, the 766-residue chain is Protein zer-1 homolog (766 aa).

A2 bears the N-acetylalanine mark. LRR repeat units lie at residues S226–L245, H246–R268, and L278–E302. ARM repeat units follow at residues R427–I467, D511–D556, T558–E600, K602–F643, and P714–N756.

It belongs to the zyg-11 family. In terms of assembly, interacts with the ELOC-ELOB/Elongin BC complex. Part of an E3 ubiquitin ligase complex including ZER1, CUL2 and Elongin BC.

Functionally, serves as substrate adapter subunit in the E3 ubiquitin ligase complex ZYG11B-CUL2-Elongin BC. Acts redudantly with ZYG11B to target substrates bearing N-terminal glycine degrons for proteasomal degradation. Involved in the clearance of proteolytic fragments generated by caspase cleavage during apoptosis since N-terminal glycine degrons are strongly enriched at caspase cleavage sites. Also important in the quality control of protein N-myristoylation in which N-terminal glycine degrons are conditionally exposed after a failure of N-myristoylation. The polypeptide is Protein zer-1 homolog (ZER1) (Pongo abelii (Sumatran orangutan)).